The sequence spans 237 residues: Lycopene beta-cyclase (237 aa).

Transmembrane regions (helical) follow at residues 3–23 (TSYLTFLAVAVGPPLVALGVV), 38–58 (VGILLALALSYTTPWDNYLIA), 80–100 (EYLFVITQTLLTGLWVQALPL), 113–133 (AVLGALAGVLVGCGGAVLLTV), 137–157 (FYIGAIIAWAAPVLALQWAVG), 170–192 (AAVLVPTLFLSAADRYAIADGIW), and 213–233 (AFFFVTNVFVSQGLILYAWVL).

Belongs to the lycopene beta-cyclase family.

The protein localises to the cell membrane. It catalyses the reaction a carotenoid psi-end group = a carotenoid beta-end derivative. It carries out the reaction all-trans-lycopene = gamma-carotene. The catalysed reaction is gamma-carotene = all-trans-beta-carotene. The protein operates within carotenoid biosynthesis; beta-carotene biosynthesis. Its function is as follows. Catalyzes the cyclization of both ends of lycopene to form beta-carotene, a retinal precursor. Is required for bacteriorhodopsin biogenesis, a light-driven proton pump with a covalently bound retinal cofactor. The polypeptide is Lycopene beta-cyclase (Halobacterium salinarum (strain ATCC 29341 / DSM 671 / R1)).